The sequence spans 437 residues: Methylenetetrahydrofolate--tRNA-(uracil-5-)-methyltransferase TrmFO (437 aa).

An FAD-binding site is contributed by 8–13 (GAGLAG).

This sequence belongs to the MnmG family. TrmFO subfamily. Requires FAD as cofactor.

Its subcellular location is the cytoplasm. The enzyme catalyses uridine(54) in tRNA + (6R)-5,10-methylene-5,6,7,8-tetrahydrofolate + NADH + H(+) = 5-methyluridine(54) in tRNA + (6S)-5,6,7,8-tetrahydrofolate + NAD(+). It carries out the reaction uridine(54) in tRNA + (6R)-5,10-methylene-5,6,7,8-tetrahydrofolate + NADPH + H(+) = 5-methyluridine(54) in tRNA + (6S)-5,6,7,8-tetrahydrofolate + NADP(+). Catalyzes the folate-dependent formation of 5-methyl-uridine at position 54 (M-5-U54) in all tRNAs. The polypeptide is Methylenetetrahydrofolate--tRNA-(uracil-5-)-methyltransferase TrmFO (Desulfitobacterium hafniense (strain Y51)).